Consider the following 291-residue polypeptide: 33 kDa chaperonin (291 aa).

Intrachain disulfides connect Cys-229–Cys-231 and Cys-262–Cys-265.

This sequence belongs to the HSP33 family. Post-translationally, under oxidizing conditions two disulfide bonds are formed involving the reactive cysteines. Under reducing conditions zinc is bound to the reactive cysteines and the protein is inactive.

It is found in the cytoplasm. Its function is as follows. Redox regulated molecular chaperone. Protects both thermally unfolding and oxidatively damaged proteins from irreversible aggregation. Plays an important role in the bacterial defense system toward oxidative stress. The chain is 33 kDa chaperonin from Aliivibrio fischeri (strain ATCC 700601 / ES114) (Vibrio fischeri).